We begin with the raw amino-acid sequence, 664 residues long: MSWKRYLKWVSFAIIPLLFANTSIKSKLIDTNLYLVKDDFQSQNQLTIATNQLAKIIVNQIEFDSNSLIANPTTVLNKELIGSKITPKLKFSDQFSNAIEMVSKLNQEFDQLANKDKTFFQFALDLLEKQEESKFDFEPKDERIDAIFFLSNLININPKQEKTLNFIRILPNLIKSIFKDTTITINIKIGGKNKVITFIENGSNVFLLSDVENFLNADQTGINFYEIEFLTFDFIVVNKTGWTLKNQPVDSFFKSVKNLPSIQKTKNGFQYSLKFRSEYNEHHILKDHFLIPIVTNQKNFSVNDIEKNGLNSYQREQITYAIKNSFTSQKENNLNISSATIKYIKDPEKLIKKSLIKPSVKNGIFYVSAQIINSNDLTKWGSKNDSEIIKDKMYFLEQNKNFPAIRTYLFQMRTKKLVLNVNDIWFKSSGDKLRVIVNNVEIDEFNPKENNTSFFESYEVHINDYFSLANKELLIKKLNLALSEMNLLIDKKKSSLDLFPKEIKLTTLKINSSLHFYLNVDAIKNQLNIEVNISKNRLTSLVYDIAIKNENELQIRTTNNYLNKYIWFDLDKKNNQKLKNELKLFLSLKKFQFKKEPNFSLKKNSYSFQIDKIIQSNSEDKKTDIIVYLIIGFSVLVLFITVFIYFHKWNKKQKMIKNKTRDNF.

Residues M1–K25 form the signal peptide. Residues I625–Y645 traverse the membrane as a helical segment.

The protein belongs to the MG414/MG415 family.

The protein resides in the cell membrane. This is an uncharacterized protein from Mycoplasma genitalium (strain ATCC 33530 / DSM 19775 / NCTC 10195 / G37) (Mycoplasmoides genitalium).